A 395-amino-acid chain; its full sequence is Protein SGT1 (395 aa).

Residue lysine 32 forms a Glycyl lysine isopeptide (Lys-Gly) (interchain with G-Cter in ubiquitin) linkage. The interval 137 to 175 is disordered; it reads KKNKKQKDSTNKHTIKPVESIENRGDNNSSHSPISPLKI. Serine 168 and serine 171 each carry phosphoserine. Residues 182-277 form the CS domain; that stretch reads SPKFKIDWYQ…IDSTQWKKLE (96 aa). The SGS domain maps to 312-395; sequence SYPSSSKKKI…PPEGMEPKHW (84 aa). The segment at 373–395 is disordered; sequence DWEDVSKGTVKTSPPEGMEPKHW.

This sequence belongs to the SGT1 family. As to quaternary structure, interacts with SKP1/CBF3D. Part of SCF E3 ubiquitin ligase complexes containing SKP1, CDC53, HRT1 and some F-box proteins. Interacts with CIR1/CDC35.

Involved in ubiquitination and subsequent proteasomal degradation of target proteins. Required for both entry into S phase and kinetochore function. Also involved in cyclic AMP (cAMP) pathway, possibly by participating in the assembly or the conformational activation of specific multiprotein complexes. The chain is Protein SGT1 from Saccharomyces cerevisiae (strain ATCC 204508 / S288c) (Baker's yeast).